Reading from the N-terminus, the 236-residue chain is Small ribosomal subunit protein uS3 (236 aa).

In terms of domain architecture, KH type-2 spans I39 to R107. Residues A214 to A236 form a disordered region.

The protein belongs to the universal ribosomal protein uS3 family. Part of the 30S ribosomal subunit. Forms a tight complex with proteins S10 and S14.

In terms of biological role, binds the lower part of the 30S subunit head. Binds mRNA in the 70S ribosome, positioning it for translation. The polypeptide is Small ribosomal subunit protein uS3 (Bartonella tribocorum (strain CIP 105476 / IBS 506)).